A 156-amino-acid chain; its full sequence is S-ribosylhomocysteine lyase (156 aa).

Fe cation is bound by residues histidine 56, histidine 60, and cysteine 123.

It belongs to the LuxS family. In terms of assembly, homodimer. Fe cation is required as a cofactor.

It catalyses the reaction S-(5-deoxy-D-ribos-5-yl)-L-homocysteine = (S)-4,5-dihydroxypentane-2,3-dione + L-homocysteine. Involved in the synthesis of autoinducer 2 (AI-2) which is secreted by bacteria and is used to communicate both the cell density and the metabolic potential of the environment. The regulation of gene expression in response to changes in cell density is called quorum sensing. Catalyzes the transformation of S-ribosylhomocysteine (RHC) to homocysteine (HC) and 4,5-dihydroxy-2,3-pentadione (DPD). In Staphylococcus aureus (strain Mu3 / ATCC 700698), this protein is S-ribosylhomocysteine lyase.